The following is a 1738-amino-acid chain: Complement C4-B (1738 aa).

A signal peptide spans methionine 1 to glutamine 19. A disulfide bond links cysteine 66 and cysteine 95. An N-linked (GlcNAc...) asparagine glycan is attached at asparagine 224. Cysteine 633 and cysteine 667 are joined by a disulfide. The propeptide occupies arginine 674–arginine 677. 3 disulfides stabilise this stretch: cysteine 700/cysteine 726, cysteine 701/cysteine 733, and cysteine 714/cysteine 734. One can recognise an Anaphylatoxin-like domain in the interval cysteine 700 to cysteine 734. The N-linked (GlcNAc...) asparagine glycan is linked to asparagine 743. The segment at residues cysteine 1006–glutamine 1009 is a cross-link (isoglutamyl cysteine thioester (Cys-Gln)). Asparagine 1324 and asparagine 1387 each carry an N-linked (GlcNAc...) asparagine glycan. Tyrosine 1413, tyrosine 1416, and tyrosine 1417 each carry sulfotyrosine. Positions arginine 1444–arginine 1447 are excised as a propeptide. Disulfide bonds link cysteine 1465/cysteine 1529, cysteine 1577/cysteine 1582, cysteine 1589/cysteine 1667, cysteine 1612/cysteine 1736, and cysteine 1712/cysteine 1721. Residues cysteine 1589–cysteine 1736 form the NTR domain.

As to quaternary structure, in absence of complement activation, circulates in blood as a disulfide-linked trimer of an alpha, beta and gamma chain. Complement C4b is composed of complement C4b-A, complement C4 beta and complement C4 gamma chains that are associated via disulfide bonds. Non-enzymatic component of the C3 convertase, also named C4bC2b, composed of the serine protease complement C2b (C2), as well as complement C4b. Non-enzymatic component of the C5 convertase, also named C4bC2bC3b, composed of the serine protease complement C2b (C2), complement C3b, as well as complement C4b. In terms of processing, prior to secretion, the single-chain precursor is enzymatically cleaved by plasminogen (PLG) to yield non-identical chains alpha, beta and gamma. During activation of the complement systems, the alpha chain is cleaved into C4a and C4b by different proteases depending on the complement pathway: C4b stays linked to the beta and gamma chains, while C4a is released in the plasma. The alpha chain is cleaved by C1S to generate C4a and C4b following activation by the classical complement system. The alpha chain is cleaved to generate C4a and C4b by MASP2 following activation by the lectin complement system. The alpha chain is cleaved by GZMK to generate C4a and C4b following activation by the GZMK complement system. Further degradation of C4b by C1 into the inactive fragments C4c and C4d blocks the generation of C3 convertase. The proteolytic cleavages often are incomplete so that many structural forms can be found in plasma. Upon activation, the internal thioester bond reacts with carbohydrate antigens on the target surface to form amide or ester bonds, leading to covalent association with the surface of pathogens. Post-translationally, complement C4b interacts with complement C3b via a thioester linkage.

The protein localises to the secreted. It is found in the cell surface. In terms of biological role, precursor of non-enzymatic components of the classical, lectin and GZMK complement pathways, which consist in a cascade of proteins that leads to phagocytosis and breakdown of pathogens and signaling that strengthens the adaptive immune system. Its function is as follows. Non-enzymatic component of C3 and C5 convertases. Generated following cleavage by complement proteases (C1S, MASP2 or GZMK, depending on the complement pathway), it covalently attaches to the surface of pathogens, where it acts as an opsonin that marks the surface of antigens for removal. It then recruits the serine protease complement C2b to form the C3 and C5 convertases, which cleave and activate C3 and C5, respectively, the next components of the complement pathways. Complement C4b-A isotype is responsible for effective binding to form amide bonds with immune aggregates or protein antigens, while complement C4b-B isotype catalyzes the transacylation of the thioester carbonyl group to form ester bonds with carbohydrate antigens. Putative humoral mediator released following cleavage by complement proteases (C1S, MASP2 or GZMK, depending on the complement pathway). While it is strongly similar to anaphylatoxins, its role is unclear. Was reported to act as a mediator of local inflammatory process; however these effects were probably due to contamination with C3a and/C5a anaphylatoxins in biological assays. The sequence is that of Complement C4-B from Mus musculus (Mouse).